Here is a 123-residue protein sequence, read N- to C-terminus: Small ribosomal subunit protein uS12c (123 aa).

Residues 103 to 123 are disordered; it reads AAGVKNRKQSRSKYGAKKPKE. A compositionally biased stretch (basic residues) spans 107 to 123; sequence KNRKQSRSKYGAKKPKE.

Belongs to the universal ribosomal protein uS12 family. Part of the 30S ribosomal subunit.

The protein localises to the plastid. It localises to the chloroplast. With S4 and S5 plays an important role in translational accuracy. Located at the interface of the 30S and 50S subunits. In Guillardia theta (Cryptophyte), this protein is Small ribosomal subunit protein uS12c (rps12).